Reading from the N-terminus, the 1997-residue chain is Receptor-type tyrosine-protein phosphatase beta (1997 aa).

Residues 1–22 form the signal peptide; that stretch reads MLSHGAGLALWITLSLLQTGLA. Fibronectin type-III domains lie at 23–111, 112–207, 203–288, 291–378, 379–471, 467–552, 556–641, 642–729, 730–829, 819–906, 909–1001, 995–1083, 1087–1175, 1173–1260, 1260–1356, 1357–1448, and 1458–1554; these read EPER…TDPL, PPAR…SPVK, PSPV…VRTA, EVSN…TFPD, KVAN…LAVL, PLAV…KGRT, QVTD…EGRT, VPSS…QERT, VPDK…TLRN, PEPV…GFTV, AVKN…VQGV, PASV…EGRT, AVTD…VPAS, PASV…SRTA, APSP…TKPD, KIQN…IDRP, and NEKD…EMES. Residues 23–1621 are Extracellular-facing; it reads EPERCNFTLA…ESEPLFGAIE (1599 aa). N-linked (GlcNAc...) asparagine glycosylation is found at asparagine 28, asparagine 53, asparagine 75, asparagine 172, asparagine 198, asparagine 267, asparagine 321, asparagine 414, asparagine 421, asparagine 479, asparagine 544, asparagine 574, asparagine 598, asparagine 652, asparagine 721, and asparagine 829. 10 N-linked (GlcNAc...) asparagine glycosylation sites follow: asparagine 1040, asparagine 1096, asparagine 1163, asparagine 1185, asparagine 1212, asparagine 1274, asparagine 1367, asparagine 1470, asparagine 1474, and asparagine 1518. The chain crosses the membrane as a helical span at residues 1622–1642; that stretch reads GVSAGLFLIGMLVAVVALLIC. The Cytoplasmic segment spans residues 1643–1997; sequence RQKVSHGRER…YHRDPVYSRH (355 aa). Residues 1703–1963 enclose the Tyrosine-protein phosphatase domain; it reads LSKEYEELKD…VYLHQCVRDV (261 aa). Substrate is bound by residues aspartate 1870, 1904–1910, and glutamine 1948; that span reads CSAGVGR. Cysteine 1904 serves as the catalytic Phosphocysteine intermediate. Position 1981 is a phosphotyrosine (tyrosine 1981).

It belongs to the protein-tyrosine phosphatase family. Receptor class 3 subfamily. Monomer. Interacts with TEK. Interacts via fibronectin type-III 17 domain with CDH5. Detected in a complex with CNTN1 and NRCAM. Interacts (phosphorylated form) with FYN and GRB2. Interacts with IGFBP2.

The protein localises to the membrane. It catalyses the reaction O-phospho-L-tyrosyl-[protein] + H2O = L-tyrosyl-[protein] + phosphate. Its function is as follows. Plays an important role in blood vessel remodeling and angiogenesis. Not necessary for the initial formation of blood vessels, but is essential for their maintenance and remodeling. Can induce dephosphorylation of TEK/TIE2, CDH5/VE-cadherin and KDR/VEGFR-2. Regulates angiopoietin-TIE2 signaling in endothelial cells. Acts as a negative regulator of TIE2, and controls TIE2 driven endothelial cell proliferation, which in turn affects blood vessel remodeling during embryonic development and determines blood vessel size during perinatal growth. Essential for the maintenance of endothelial cell contact integrity and for the adhesive function of VE-cadherin in endothelial cells and this requires the presence of plakoglobin. This is Receptor-type tyrosine-protein phosphatase beta (PTPRB) from Homo sapiens (Human).